Here is a 274-residue protein sequence, read N- to C-terminus: Dermonecrotic toxin SaSicTox-betaIIB1 (274 aa).

Histidine 5 is an active-site residue. Mg(2+) is bound by residues glutamate 25 and aspartate 27. Catalysis depends on histidine 41, which acts as the Nucleophile. Disulfide bonds link cysteine 45-cysteine 51 and cysteine 47-cysteine 190. Residue aspartate 85 participates in Mg(2+) binding.

This sequence belongs to the arthropod phospholipase D family. Class II subfamily. Mg(2+) serves as cofactor. As to expression, expressed by the venom gland.

It is found in the secreted. It carries out the reaction an N-(acyl)-sphingosylphosphocholine = an N-(acyl)-sphingosyl-1,3-cyclic phosphate + choline. It catalyses the reaction an N-(acyl)-sphingosylphosphoethanolamine = an N-(acyl)-sphingosyl-1,3-cyclic phosphate + ethanolamine. The catalysed reaction is a 1-acyl-sn-glycero-3-phosphocholine = a 1-acyl-sn-glycero-2,3-cyclic phosphate + choline. The enzyme catalyses a 1-acyl-sn-glycero-3-phosphoethanolamine = a 1-acyl-sn-glycero-2,3-cyclic phosphate + ethanolamine. Its function is as follows. Dermonecrotic toxins cleave the phosphodiester linkage between the phosphate and headgroup of certain phospholipids (sphingolipid and lysolipid substrates), forming an alcohol (often choline) and a cyclic phosphate. This toxin acts on sphingomyelin (SM). It may also act on ceramide phosphoethanolamine (CPE), lysophosphatidylcholine (LPC) and lysophosphatidylethanolamine (LPE), but not on lysophosphatidylserine (LPS), and lysophosphatidylglycerol (LPG). It acts by transphosphatidylation, releasing exclusively cyclic phosphate products as second products. Induces dermonecrosis, hemolysis, increased vascular permeability, edema, inflammatory response, and platelet aggregation. The protein is Dermonecrotic toxin SaSicTox-betaIIB1 of Sicarius albospinosus (Six-eyed crab spider).